The following is a 363-amino-acid chain: Phosphoserine aminotransferase (363 aa).

Arginine 42 contributes to the L-glutamate binding site. Residues 76-77, tryptophan 102, threonine 156, aspartate 175, and glutamine 198 contribute to the pyridoxal 5'-phosphate site; that span reads GR. Residue lysine 199 is modified to N6-(pyridoxal phosphate)lysine. Residue 240-241 participates in pyridoxal 5'-phosphate binding; sequence NT.

Belongs to the class-V pyridoxal-phosphate-dependent aminotransferase family. SerC subfamily. In terms of assembly, homodimer. The cofactor is pyridoxal 5'-phosphate.

The protein localises to the cytoplasm. It catalyses the reaction O-phospho-L-serine + 2-oxoglutarate = 3-phosphooxypyruvate + L-glutamate. It carries out the reaction 4-(phosphooxy)-L-threonine + 2-oxoglutarate = (R)-3-hydroxy-2-oxo-4-phosphooxybutanoate + L-glutamate. The protein operates within amino-acid biosynthesis; L-serine biosynthesis; L-serine from 3-phospho-D-glycerate: step 2/3. Its pathway is cofactor biosynthesis; pyridoxine 5'-phosphate biosynthesis; pyridoxine 5'-phosphate from D-erythrose 4-phosphate: step 3/5. Its function is as follows. Catalyzes the reversible conversion of 3-phosphohydroxypyruvate to phosphoserine and of 3-hydroxy-2-oxo-4-phosphonooxybutanoate to phosphohydroxythreonine. In Shewanella frigidimarina (strain NCIMB 400), this protein is Phosphoserine aminotransferase.